The chain runs to 300 residues: Zinc finger CCCH domain-containing protein 14 (300 aa).

Residues 1 to 38 (MEVGGRKRGKPDGANGAGGKRARESESFQTGVGSKSKP) are disordered. 2 consecutive C3H1-type zinc fingers follow at residues 33-61 (GSKSKPCTKFFSTSGCPFGEGCHFLHHFP) and 99-127 (TVKTRLCNKYNTAEGCKWGDKCHFAHGER). The KH domain maps to 170 to 234 (SATAKISVDA…DQIKNASAMV (65 aa)). The disordered stretch occupies residues 243–262 (GGAPPQGKKPVGGSHRGGGP). The C3H1-type 3 zinc finger occupies 265–292 (NFKTKLCENFTKGSCTFGDRCHFAHGEN).

This chain is Zinc finger CCCH domain-containing protein 14, found in Oryza sativa subsp. japonica (Rice).